The following is a 565-amino-acid chain: uncharacterized protein (565 aa).

13 consecutive transmembrane segments (helical) span residues 8–28 (ISFIAAMLIVIGSSIGAGIFF), 43–63 (LAIFNWLVASVAVIAMALALI), 95–115 (MTYLYLPLTFFFMPLYFICSI), 137–157 (WLIWLALALIITTYFLTIPPL), 167–187 (MVVSAVKFIPLVFVPIIGFIV), 227–247 (FTGIGAGMGSFISIAAIFFAY), 268–288 (WALFLGLLITTLFYLILAVAL), 314–334 (IVFGVVNLMIGIGVLGIINGF), 367–387 (VVGVIYCLVLSLTVQVLFTVI), 424–444 (ATWTSLFTFAFIACAIFGAIV), 460–480 (FLPAAWIAVVVNCISVFVTII), 482–502 (PFINLFLLFGYDETVAHTVLG), and 516–536 (VMLIVVLVFFAIISFLPVYVE).

This sequence to M.pneumoniae MPN_095 and MPN_096.

It localises to the cell membrane. This is an uncharacterized protein from Mycoplasma pneumoniae (strain ATCC 29342 / M129 / Subtype 1) (Mycoplasmoides pneumoniae).